We begin with the raw amino-acid sequence, 23 residues long: Ascaphin-1 (23 aa).

Asn-23 is subject to Asparagine amide.

Expressed by the skin glands.

Its subcellular location is the secreted. Antimicrobial peptide that shows higher potency against Gram-negative bacteria than against Gram-positive bacteria. Has a very week hemolytic activity. This chain is Ascaphin-1, found in Ascaphus truei (Coastal tailed frog).